The chain runs to 612 residues: Probable translation initiation factor IF-2 (612 aa).

The tr-type G domain maps to 11 to 229 (LRQPIVVVLG…VLAGLTQRYL (219 aa)). The G1 stretch occupies residues 20 to 27 (GHVDHGKT). Position 20-27 (20-27 (GHVDHGKT)) interacts with GTP. Positions 45–49 (LITQH) are G2. Residues 84–87 (DTPG) form a G3 region. Residues 84–88 (DTPGH) and 138–141 (NKID) contribute to the GTP site. Residues 138–141 (NKID) are G4. The interval 207–209 (SAK) is G5.

It belongs to the TRAFAC class translation factor GTPase superfamily. Classic translation factor GTPase family. IF-2 subfamily.

Function in general translation initiation by promoting the binding of the formylmethionine-tRNA to ribosomes. Seems to function along with eIF-2. The protein is Probable translation initiation factor IF-2 of Hyperthermus butylicus (strain DSM 5456 / JCM 9403 / PLM1-5).